The following is a 172-amino-acid chain: Endoribonuclease YbeY (172 aa).

3 residues coordinate Zn(2+): H136, H140, and H146.

This sequence belongs to the endoribonuclease YbeY family. Zn(2+) is required as a cofactor.

It is found in the cytoplasm. Single strand-specific metallo-endoribonuclease involved in late-stage 70S ribosome quality control and in maturation of the 3' terminus of the 16S rRNA. In Rickettsia canadensis (strain McKiel), this protein is Endoribonuclease YbeY.